Reading from the N-terminus, the 334-residue chain is Dihydroorotate dehydrogenase (quinone) (334 aa).

FMN is bound by residues 61-65 (AGLDK) and Thr-85. Residue Lys-65 participates in substrate binding. 110–114 (NRMGF) serves as a coordination point for substrate. 2 residues coordinate FMN: Asn-138 and Asn-171. A substrate-binding site is contributed by Asn-171. The active-site Nucleophile is the Ser-174. Asn-176 contacts substrate. FMN is bound by residues Lys-216 and Thr-244. Residue 245–246 (NT) participates in substrate binding. FMN contacts are provided by residues Gly-266, Gly-295, and 316–317 (YT).

This sequence belongs to the dihydroorotate dehydrogenase family. Type 2 subfamily. As to quaternary structure, monomer. Requires FMN as cofactor.

It localises to the cell membrane. The catalysed reaction is (S)-dihydroorotate + a quinone = orotate + a quinol. The protein operates within pyrimidine metabolism; UMP biosynthesis via de novo pathway; orotate from (S)-dihydroorotate (quinone route): step 1/1. Its function is as follows. Catalyzes the conversion of dihydroorotate to orotate with quinone as electron acceptor. This Idiomarina loihiensis (strain ATCC BAA-735 / DSM 15497 / L2-TR) protein is Dihydroorotate dehydrogenase (quinone).